Here is a 314-residue protein sequence, read N- to C-terminus: Deoxymugineic acid synthase 1-B (314 aa).

Positions 1–22 are disordered; that stretch reads MGAGDKTAAGMPRIGMGTAVQG. Asp-44 contributes to the NADP(+) binding site. Catalysis depends on Tyr-49, which acts as the Proton donor. His-112 provides a ligand contact to substrate. Residues 158–159, Gln-180, 258–266, and 273–281 contribute to the NADP(+) site; these read AN, FDEARMREN, and ELTEEERRR.

Belongs to the aldo/keto reductase family. Mostly expressed in root tissues, observed in mesocotyl and embryonic roots, seedling roots, crown and seedling leafes, mature bracts, anthers, pistil, caryopsis and embryos.

It carries out the reaction 2'-deoxymugineate + NAD(+) = 3''-deamino-3''-oxonicotianamine + NADH + H(+). The enzyme catalyses 2'-deoxymugineate + NADP(+) = 3''-deamino-3''-oxonicotianamine + NADPH + H(+). Its pathway is siderophore biosynthesis. Functionally, catalyzes the reduction of a 3''-keto intermediate during the biosynthesis of 2'-deoxymugineic acid (DMA) from L-Met. Involved in the formation of phytosiderophores (MAs) belonging to the mugineic acid family and required to acquire iron. In Triticum aestivum (Wheat), this protein is Deoxymugineic acid synthase 1-B.